The primary structure comprises 402 residues: Tumor necrosis factor receptor superfamily member 11B (402 aa).

The first 21 residues, 1 to 21 (MNKLLCCALVFLDISIKWTTQ), serve as a signal peptide directing secretion. 4 TNFR-Cys repeats span residues 24–62 (FPPKYLHYDPESSRQLMCDKCPPGTFLKQPCTARRKTVC), 64–105 (PCPD…NRVC), 106–142 (ECEEGRYLELEFCLKHRSCPPGFGVLHPGTPERNTVC), and 144–185 (RCPD…DNIC). 8 cysteine pairs are disulfide-bonded: Cys-41–Cys-54, Cys-44–Cys-62, Cys-65–Cys-80, Cys-83–Cys-97, Cys-87–Cys-105, Cys-107–Cys-118, Cys-124–Cys-142, and Cys-145–Cys-160. Asn-165 and Asn-178 each carry an N-linked (GlcNAc...) asparagine glycan. The cysteines at positions 166 and 185 are disulfide-linked. Death domains lie at 198–269 (IDMT…DMVK) and 270–365 (KIIQ…VIQS).

In terms of assembly, homodimer. Interacts with TNFSF10 and TNFSF11. Post-translationally, N-glycosylated. Contains sialic acid residues.

It is found in the secreted. Its function is as follows. Acts as a decoy receptor for TNFSF11/RANKL and thereby neutralizes its function in osteoclastogenesis. Inhibits the activation of osteoclasts and promotes osteoclast apoptosis. Bone homeostasis seems to depend on the local ratio between TNFSF11 and TNFRSF11B. May also play a role in preventing arterial calcification. May act as decoy receptor for TNFSF10/TRAIL and protect against apoptosis. TNFSF10/TRAIL binding blocks the inhibition of osteoclastogenesis. This chain is Tumor necrosis factor receptor superfamily member 11B (TNFRSF11B), found in Bos taurus (Bovine).